The primary structure comprises 414 residues: Sensor protein CutS (414 aa).

The span at 1 to 15 (MATTPAPPGAPPKPT) shows a compositional bias: pro residues. The tract at residues 1 to 21 (MATTPAPPGAPPKPTWDPRSA) is disordered. The next 2 membrane-spanning stretches (helical) occupy residues 37–57 (LLYGGMFLIAGILLLSIIYLL) and 121–141 (SLLALLGLAVIAFAFGYAMAG). Residues 142–194 (RVLSPLGRITRTARAVAGSDLSRRIELDGPDDELKELADTFDDMLERLQRAFT) form the HAMP domain. Residues 202 to 414 (NASHELRTPL…GLVMRVTLPV (213 aa)) enclose the Histidine kinase domain. H205 carries the phosphohistidine; by autocatalysis modification.

The protein resides in the cell membrane. It carries out the reaction ATP + protein L-histidine = ADP + protein N-phospho-L-histidine.. In terms of biological role, member of the two-component regulatory system CutS/CutR, involved in the regulation of copper metabolism. The chain is Sensor protein CutS (cutS) from Streptomyces coelicolor (strain ATCC BAA-471 / A3(2) / M145).